The following is a 316-amino-acid chain: MSSQKQLEGMIFDVQSFSVHDGPGCRTTVFLNGCPLSCKWCANPESWTVRPHMMFSELSCQYENGCTVCHGKCKNGALSFNLDNKPVIDWNICKDCESFECVNSCYYNAFKLCAKPYTVDELVQVIKRDSNNWRSNGGVTFSGGEPLLQHEFLHEVLLKCHEVNVHTAIETSACVSNEVFNKIFNDIDFAFIDIKHMDREKHKEQTGVYNDLILENISNLANSDWNGRLVLRVPVISGFNDSDENISDIISFMHKNNLVEINLLPFHRLGESKWTQLGKEYEYSDKGDVDEGHLEELQDIFLDNGIACYVGHVTAF.

Residues 20 to 307 (HDGPGCRTTV…QDIFLDNGIA (288 aa)) form the Radical SAM core domain. Residues C34, C38, C41, C60, C66, C69, and C105 each contribute to the [4Fe-4S] cluster site. 40-42 (WCA) contributes to the S-adenosyl-L-methionine binding site. A 4Fe-4S ferredoxin-type domain is found at 84–115 (NKPVIDWNICKDCESFECVNSCYYNAFKLCAK). S-adenosyl-L-methionine contacts are provided by residues G144, 193–195 (DIK), and H267.

Belongs to the organic radical-activating enzymes family. Monomer. [4Fe-4S] cluster is required as a cofactor.

The catalysed reaction is glycyl-[protein] + reduced [flavodoxin] + S-adenosyl-L-methionine = glycin-2-yl radical-[protein] + semiquinone [flavodoxin] + 5'-deoxyadenosine + L-methionine + H(+). Catalyzes activation of 4-hydroxyphenylacetate decarboxylase under anaerobic conditions by generation of an organic free radical on a glycine residue, via a homolytic cleavage of S-adenosyl-L-methionine (SAM). The polypeptide is 4-hydroxyphenylacetate decarboxylase activating enzyme (Clostridioides difficile (Peptoclostridium difficile)).